The following is a 545-amino-acid chain: Delta 8-(E)-sphingolipid desaturase (545 aa).

Residues methionine 1–glutamine 82 enclose the Cytochrome b5 heme-binding domain. 2 residues coordinate heme: histidine 42 and histidine 65. The interval phenylalanine 97–alanine 124 is disordered. The chain crosses the membrane as a helical span at residues leucine 227 to serine 247. A Histidine box-1 motif is present at residues histidine 249–histidine 253. A helical transmembrane segment spans residues valine 262–tryptophan 282. The Histidine box-2 motif lies at histidine 286 to histidine 290. Helical transmembrane passes span isoleucine 382–proline 402 and leucine 408–serine 428. The short motif at glutamine 470–histidine 474 is the Histidine box-3 element.

This sequence belongs to the fatty acid desaturase type 1 family.

The protein localises to the membrane. The catalysed reaction is an N-acylsphing-4-enine + 2 Fe(II)-[cytochrome b5] + O2 + 2 H(+) = a (4E,8E)-4-sphinga-4,8-dienine ceramide + 2 Fe(III)-[cytochrome b5] + 2 H2O. It participates in lipid metabolism; sphingolipid metabolism. Its function is as follows. Delta(8)-fatty-acid desaturase which introduces a double bond at the 8-position in the long-chain base (LCB) of ceramides. Required for the formation of the di-unsaturated sphingoid base (E,E)-sphinga-4,8-dienine during glucosylceramide (GluCer) biosynthesis. Plays an important role in conidiation. In Emericella nidulans (strain FGSC A4 / ATCC 38163 / CBS 112.46 / NRRL 194 / M139) (Aspergillus nidulans), this protein is Delta 8-(E)-sphingolipid desaturase.